The primary structure comprises 478 residues: Glutamate--tRNA ligase (478 aa).

Positions 15 to 25 (PSPTGFLHIGG) match the 'HIGH' region motif. The 'KMSKS' region signature appears at 244–248 (KLSKR). ATP is bound at residue Lys-247.

The protein belongs to the class-I aminoacyl-tRNA synthetase family. Glutamate--tRNA ligase type 1 subfamily. As to quaternary structure, monomer.

It is found in the cytoplasm. It carries out the reaction tRNA(Glu) + L-glutamate + ATP = L-glutamyl-tRNA(Glu) + AMP + diphosphate. Functionally, catalyzes the attachment of glutamate to tRNA(Glu) in a two-step reaction: glutamate is first activated by ATP to form Glu-AMP and then transferred to the acceptor end of tRNA(Glu). This is Glutamate--tRNA ligase from Bradyrhizobium sp. (strain ORS 278).